Consider the following 157-residue polypeptide: Transcription elongation factor GreA (157 aa).

The stretch at 13–75 (RARLEAELEE…EIKSILARAQ (63 aa)) forms a coiled coil.

Belongs to the GreA/GreB family.

In terms of biological role, necessary for efficient RNA polymerase transcription elongation past template-encoded arresting sites. The arresting sites in DNA have the property of trapping a certain fraction of elongating RNA polymerases that pass through, resulting in locked ternary complexes. Cleavage of the nascent transcript by cleavage factors such as GreA or GreB allows the resumption of elongation from the new 3'terminus. GreA releases sequences of 2 to 3 nucleotides. This chain is Transcription elongation factor GreA, found in Roseiflexus castenholzii (strain DSM 13941 / HLO8).